Consider the following 118-residue polypeptide: Iron-sulfur cluster assembly protein CyaY (118 aa).

The protein belongs to the frataxin family.

Involved in iron-sulfur (Fe-S) cluster assembly. May act as a regulator of Fe-S biogenesis. This Buchnera aphidicola subsp. Baizongia pistaciae (strain Bp) protein is Iron-sulfur cluster assembly protein CyaY.